The sequence spans 261 residues: Triosephosphate isomerase (261 aa).

10-12 (NWK) is a binding site for substrate. The Electrophile role is filled by H100. Catalysis depends on E172, which acts as the Proton acceptor. Residues G178, S218, and 239–240 (GG) contribute to the substrate site.

It belongs to the triosephosphate isomerase family. Homodimer.

Its subcellular location is the cytoplasm. The enzyme catalyses D-glyceraldehyde 3-phosphate = dihydroxyacetone phosphate. Its pathway is carbohydrate biosynthesis; gluconeogenesis. The protein operates within carbohydrate degradation; glycolysis; D-glyceraldehyde 3-phosphate from glycerone phosphate: step 1/1. Functionally, involved in the gluconeogenesis. Catalyzes stereospecifically the conversion of dihydroxyacetone phosphate (DHAP) to D-glyceraldehyde-3-phosphate (G3P). This Saccharopolyspora erythraea (strain ATCC 11635 / DSM 40517 / JCM 4748 / NBRC 13426 / NCIMB 8594 / NRRL 2338) protein is Triosephosphate isomerase.